The sequence spans 261 residues: NADH-ubiquinone oxidoreductase chain 1 (261 aa).

Helical transmembrane passes span 2-22 (LIYS…ITLL), 69-89 (FFVA…MNSI), 103-123 (IVYA…TGYF), 138-158 (ILML…CFLV), 172-192 (IFWL…VFLL), and 224-244 (FYLG…VVFF).

This sequence belongs to the complex I subunit 1 family.

The protein resides in the mitochondrion inner membrane. It catalyses the reaction a ubiquinone + NADH + 5 H(+)(in) = a ubiquinol + NAD(+) + 4 H(+)(out). Core subunit of the mitochondrial membrane respiratory chain NADH dehydrogenase (Complex I) that is believed to belong to the minimal assembly required for catalysis. Complex I functions in the transfer of electrons from NADH to the respiratory chain. The immediate electron acceptor for the enzyme is believed to be ubiquinone. This chain is NADH-ubiquinone oxidoreductase chain 1 (ND1), found in Paramecium tetraurelia.